We begin with the raw amino-acid sequence, 427 residues long: Enolase (427 aa).

Position 163 (Q163) interacts with (2R)-2-phosphoglycerate. Residue E205 is the Proton donor of the active site. Mg(2+) contacts are provided by D242, E285, and D312. Residues K337, R366, S367, and K388 each contribute to the (2R)-2-phosphoglycerate site. K337 serves as the catalytic Proton acceptor.

It belongs to the enolase family. The cofactor is Mg(2+).

The protein localises to the cytoplasm. It localises to the secreted. The protein resides in the cell surface. The enzyme catalyses (2R)-2-phosphoglycerate = phosphoenolpyruvate + H2O. The protein operates within carbohydrate degradation; glycolysis; pyruvate from D-glyceraldehyde 3-phosphate: step 4/5. Functionally, catalyzes the reversible conversion of 2-phosphoglycerate (2-PG) into phosphoenolpyruvate (PEP). It is essential for the degradation of carbohydrates via glycolysis. The chain is Enolase from Burkholderia vietnamiensis (strain G4 / LMG 22486) (Burkholderia cepacia (strain R1808)).